The sequence spans 258 residues: Proteasome subunit alpha (258 aa).

This sequence belongs to the peptidase T1A family. In terms of assembly, the 20S proteasome core is composed of 14 alpha and 14 beta subunits that assemble into four stacked heptameric rings, resulting in a barrel-shaped structure. The two inner rings, each composed of seven catalytic beta subunits, are sandwiched by two outer rings, each composed of seven alpha subunits. The catalytic chamber with the active sites is on the inside of the barrel. Has a gated structure, the ends of the cylinder being occluded by the N-termini of the alpha-subunits. Is capped at one or both ends by the proteasome regulatory ATPase, PAN.

It localises to the cytoplasm. Its activity is regulated as follows. The formation of the proteasomal ATPase PAN-20S proteasome complex, via the docking of the C-termini of PAN into the intersubunit pockets in the alpha-rings, triggers opening of the gate for substrate entry. Interconversion between the open-gate and close-gate conformations leads to a dynamic regulation of the 20S proteasome proteolysis activity. Functionally, component of the proteasome core, a large protease complex with broad specificity involved in protein degradation. This chain is Proteasome subunit alpha, found in Aeropyrum pernix (strain ATCC 700893 / DSM 11879 / JCM 9820 / NBRC 100138 / K1).